We begin with the raw amino-acid sequence, 546 residues long: Chaperonin GroEL 4 (546 aa).

Residues 30 to 33, lysine 51, 87 to 91, glycine 415, and aspartate 496 contribute to the ATP site; these read TLGP and DGTTT.

The protein belongs to the chaperonin (HSP60) family. In terms of assembly, forms a cylinder of 14 subunits composed of two heptameric rings stacked back-to-back. Interacts with the co-chaperonin GroES.

The protein localises to the cytoplasm. The enzyme catalyses ATP + H2O + a folded polypeptide = ADP + phosphate + an unfolded polypeptide.. Its function is as follows. Together with its co-chaperonin GroES, plays an essential role in assisting protein folding. The GroEL-GroES system forms a nano-cage that allows encapsulation of the non-native substrate proteins and provides a physical environment optimized to promote and accelerate protein folding. The polypeptide is Chaperonin GroEL 4 (Bradyrhizobium sp. (strain BTAi1 / ATCC BAA-1182)).